A 1217-amino-acid polypeptide reads, in one-letter code: ATP-dependent helicase/nuclease subunit A (1217 aa).

Residues 10 to 475 enclose the UvrD-like helicase ATP-binding domain; sequence VIWTDAQWQS…IDLSQNFRSR (466 aa). Residue 31 to 38 participates in ATP binding; the sequence is AAAGSGKT. The 311-residue stretch at 476–786 folds into the UvrD-like helicase C-terminal domain; that stretch reads KEVLSTTNYI…RMMTIHSSKG (311 aa).

This sequence belongs to the helicase family. AddA subfamily. Heterodimer of AddA and AddB/RexB. Mg(2+) serves as cofactor.

The catalysed reaction is Couples ATP hydrolysis with the unwinding of duplex DNA by translocating in the 3'-5' direction.. It catalyses the reaction ATP + H2O = ADP + phosphate + H(+). In terms of biological role, the heterodimer acts as both an ATP-dependent DNA helicase and an ATP-dependent, dual-direction single-stranded exonuclease. Recognizes the chi site generating a DNA molecule suitable for the initiation of homologous recombination. The AddA nuclease domain is required for chi fragment generation; this subunit has the helicase and 3' -&gt; 5' nuclease activities. The sequence is that of ATP-dependent helicase/nuclease subunit A from Staphylococcus aureus (strain NCTC 8325 / PS 47).